Consider the following 337-residue polypeptide: GTP 3',8-cyclase (337 aa).

The 227-residue stretch at 17 to 243 (PFQRQYYYLR…HKSHTDGPAK (227 aa)) folds into the Radical SAM core domain. Position 26 (R26) interacts with GTP. Positions 33 and 37 each coordinate [4Fe-4S] cluster. Y39 lines the S-adenosyl-L-methionine pocket. C40 contributes to the [4Fe-4S] cluster binding site. R76 contributes to the GTP binding site. G80 contacts S-adenosyl-L-methionine. Residue T107 participates in GTP binding. S131 contributes to the S-adenosyl-L-methionine binding site. K168 is a GTP binding site. Position 202 (M202) interacts with S-adenosyl-L-methionine. Residues C265 and C268 each contribute to the [4Fe-4S] cluster site. 270 to 272 (RLR) is a binding site for GTP. Residue C282 coordinates [4Fe-4S] cluster.

It belongs to the radical SAM superfamily. MoaA family. Monomer and homodimer. The cofactor is [4Fe-4S] cluster.

It carries out the reaction GTP + AH2 + S-adenosyl-L-methionine = (8S)-3',8-cyclo-7,8-dihydroguanosine 5'-triphosphate + 5'-deoxyadenosine + L-methionine + A + H(+). It functions in the pathway cofactor biosynthesis; molybdopterin biosynthesis. Its function is as follows. Catalyzes the cyclization of GTP to (8S)-3',8-cyclo-7,8-dihydroguanosine 5'-triphosphate. This chain is GTP 3',8-cyclase, found in Haemophilus influenzae (strain PittEE).